Here is a 401-residue protein sequence, read N- to C-terminus: Argininosuccinate synthase (401 aa).

Residues Ala10 to Ser18 and Ala38 contribute to the ATP site. Tyr89 is a binding site for L-citrulline. Gly119 contributes to the ATP binding site. Residues Thr121, Asn125, and Asp126 each contribute to the L-aspartate site. Residue Asn125 coordinates L-citrulline. Residues Arg129, Ser177, Ser186, Glu262, and Tyr274 each coordinate L-citrulline.

It belongs to the argininosuccinate synthase family. Type 1 subfamily. As to quaternary structure, homotetramer.

It localises to the cytoplasm. It carries out the reaction L-citrulline + L-aspartate + ATP = 2-(N(omega)-L-arginino)succinate + AMP + diphosphate + H(+). It functions in the pathway amino-acid biosynthesis; L-arginine biosynthesis; L-arginine from L-ornithine and carbamoyl phosphate: step 2/3. The chain is Argininosuccinate synthase from Prochlorococcus marinus (strain MIT 9313).